Reading from the N-terminus, the 352-residue chain is Peptide chain release factor 1 (352 aa).

Gln-229 is modified (N5-methylglutamine).

It belongs to the prokaryotic/mitochondrial release factor family. In terms of processing, methylated by PrmC. Methylation increases the termination efficiency of RF1.

Its subcellular location is the cytoplasm. Peptide chain release factor 1 directs the termination of translation in response to the peptide chain termination codons UAG and UAA. This Granulibacter bethesdensis (strain ATCC BAA-1260 / CGDNIH1) protein is Peptide chain release factor 1.